The primary structure comprises 120 residues: GATA transcription factor 23 (120 aa).

The segment at 22–76 adopts a GATA-type zinc-finger fold; sequence KGTIRCCSECKTTKTPMWRGGPTGPKSLCNACGIRHRKQRRSELLGIHIIRSHKS.

It belongs to the type IV zinc-finger family. Class B subfamily.

It localises to the nucleus. Transcriptional regulator that specifically binds 5'-GATA-3' or 5'-GAT-3' motifs within gene promoters. The chain is GATA transcription factor 23 (GATA23) from Arabidopsis thaliana (Mouse-ear cress).